The primary structure comprises 211 residues: Probable molybdenum cofactor guanylyltransferase (211 aa).

GTP contacts are provided by residues 21-23 (LAG), lysine 33, aspartate 84, and aspartate 116. Aspartate 116 contacts Mg(2+).

The protein belongs to the MobA family. It depends on Mg(2+) as a cofactor.

The protein resides in the cytoplasm. It catalyses the reaction Mo-molybdopterin + GTP + H(+) = Mo-molybdopterin guanine dinucleotide + diphosphate. Functionally, transfers a GMP moiety from GTP to Mo-molybdopterin (Mo-MPT) cofactor (Moco or molybdenum cofactor) to form Mo-molybdopterin guanine dinucleotide (Mo-MGD) cofactor. This chain is Probable molybdenum cofactor guanylyltransferase, found in Rhodopirellula baltica (strain DSM 10527 / NCIMB 13988 / SH1).